Consider the following 193-residue polypeptide: Thioredoxin reductase-like selenoprotein T1b (193 aa).

The N-terminal stretch at 1–21 (METRCLYLLLVCVLSVNHATA) is a signal peptide. Residues 44 to 47 (CVSU) constitute a cross-link (cysteinyl-selenocysteine (Cys-Sec)). Position 47 (Sec-47) is a non-standard amino acid, selenocysteine.

It belongs to the SelWTH family. Selenoprotein T subfamily. May contain a selenide-sulfide bond between Cys-44 and Sec-47. This bond is speculated to serve as redox-active pair. As to expression, widely expressed in the embryo. High level in embryonic blood at 24 hours post-fertilization (hpf).

Its subcellular location is the endoplasmic reticulum membrane. The catalysed reaction is [thioredoxin]-dithiol + NADP(+) = [thioredoxin]-disulfide + NADPH + H(+). Its function is as follows. Selenoprotein with thioredoxin reductase-like oxidoreductase activity. The protein is Thioredoxin reductase-like selenoprotein T1b of Danio rerio (Zebrafish).